Consider the following 88-residue polypeptide: Conotoxin Gm9.1 (88 aa).

The signal sequence occupies residues 1–27 (MHLSLARSAVLMLLLLFALGNFVVVQS). A propeptide spanning residues 28–58 (GLITRDVDNGQLTDNRRNLQTEWNPLSLFMS) is cleaved from the precursor. 3 disulfide bridges follow: cysteine 62–cysteine 76, cysteine 66–cysteine 78, and cysteine 72–cysteine 83. The residue at position 87 (asparagine 87) is an Asparagine amide.

The protein belongs to the conotoxin P superfamily. In terms of tissue distribution, expressed by the venom duct.

The protein resides in the secreted. In terms of biological role, neurotoxin. In vivo, elicits 'spasmodic' symptomatology. The chain is Conotoxin Gm9.1 from Conus gloriamaris (Glory-of-the-Sea cone).